The primary structure comprises 3072 residues: Eukaryotic translation initiation factor 2-alpha kinase PK4 (3072 aa).

The Cytoplasmic segment spans residues 1 to 106 (MCNFIKKGIR…EFRWLINKLE (106 aa)). The helical transmembrane segment at 107 to 127 (IIYFYFFCHLLLLCIFQNIFL) threads the bilayer. Residues 128-1643 (LTYMSKEYFL…FTSIRYKRRR (1516 aa)) lie on the Lumenal side of the membrane. The tract at residues 383–402 (KEKCHRDEKCDRGENYDRGE) is disordered. Residues 576–610 (KKKILDENDMITIDNNIDKKENILFPYFHMEILKD) form a 10 X 7 AA tandem repeat of D-K-N-[GE]-L-D-[GD] region. The disordered stretch occupies residues 970–1010 (QYEDNNDNDNNKNDNNKNDNNKNDNNKNDNNNNNNNNNNNS). A compositionally biased stretch (basic and acidic residues) spans 978–996 (DNNKNDNNKNDNNKNDNNK). Positions 997–1009 (NDNNNNNNNNNNN) are enriched in low complexity. The helical transmembrane segment at 1644–1664 (WYWRVFYTIMFIIFFPVLFIY) threads the bilayer. The Cytoplasmic segment spans residues 1665 to 3072 (RRIIKRRKGS…IKNENNGADK (1408 aa)). Disordered regions lie at residues 1737–1766 (KNYNNNNNNNNNKNNNNISNNNSNSNSKSN) and 1917–1937 (KVGSSNKYHKKNYTDNEKDKK). The segment covering 1738-1766 (NYNNNNNNNNNKNNNNISNNNSNSNSKSN) has biased composition (low complexity). Positions 1928-1937 (NYTDNEKDKK) are enriched in basic and acidic residues. ATP contacts are provided by residues 2152–2160 (IGQGGFGSV) and K2177. 3 disordered regions span residues 2316–2402 (FYSD…EGRD), 2479–2558 (RNED…KKLD), and 2691–2749 (ENDD…DDDI). Basic and acidic residues predominate over residues 2326–2335 (KNKENPEKNH). Positions 2362–2384 (HKLKKRKNKKKKSKKKRKSKSKI) are enriched in basic residues. 10 repeat units span residues 2483 to 2489 (DKNGLDG), 2490 to 2496 (DKNGLDG), 2497 to 2503 (DKNGLDG), 2504 to 2510 (DKNGLDG), 2511 to 2517 (DKNGLDG), 2518 to 2524 (DKNELDG), 2525 to 2531 (DKNGLDG), 2532 to 2538 (DKNGLDG), 2539 to 2545 (DKNGLDG), and 2546 to 2552 (DKNELDD). The Protein kinase domain occupies 2627-2998 (TNVESINTNG…KIKVLLDPHL (372 aa)). The segment covering 2692–2702 (NDDDDDDDDDN) has biased composition (acidic residues). D2835 functions as the Proton acceptor in the catalytic mechanism. T2902 is subject to Phosphothreonine.

Belongs to the protein kinase superfamily. Ser/Thr protein kinase family. GCN2 subfamily. As to quaternary structure, may form oligomers in response to stress; oligomerization may result in catalytic activity. Interacts with BIP; the interaction is disrupted in response to stress. In terms of processing, auto-phosphorylated.

The protein localises to the endoplasmic reticulum membrane. It catalyses the reaction L-seryl-[protein] + ATP = O-phospho-L-seryl-[protein] + ADP + H(+). The catalysed reaction is L-threonyl-[protein] + ATP = O-phospho-L-threonyl-[protein] + ADP + H(+). With respect to regulation, dissociation from BIP and oligomerization, may results autophosphorylation and kinase activity induction. During the asexual blood stage, phosphorylates translation factor eIF2alpha in late schizonts resulting in protein translation inhibition. Plays a role in trophozoite differentiation into schizonts. The polypeptide is Eukaryotic translation initiation factor 2-alpha kinase PK4 (Plasmodium falciparum (isolate 3D7)).